We begin with the raw amino-acid sequence, 366 residues long: Histidinol-phosphate aminotransferase 2 (366 aa).

A compositionally biased stretch (polar residues) spans 1-11 (MQVKDQLSSLQ). The tract at residues 1-21 (MQVKDQLSSLQPYKPGKSPEQ) is disordered. N6-(pyridoxal phosphate)lysine is present on K222.

It belongs to the class-II pyridoxal-phosphate-dependent aminotransferase family. Histidinol-phosphate aminotransferase subfamily. As to quaternary structure, homodimer. Requires pyridoxal 5'-phosphate as cofactor.

The catalysed reaction is L-histidinol phosphate + 2-oxoglutarate = 3-(imidazol-4-yl)-2-oxopropyl phosphate + L-glutamate. Its pathway is amino-acid biosynthesis; L-histidine biosynthesis; L-histidine from 5-phospho-alpha-D-ribose 1-diphosphate: step 7/9. This is Histidinol-phosphate aminotransferase 2 from Bacillus thuringiensis subsp. konkukian (strain 97-27).